A 405-amino-acid chain; its full sequence is 4-hydroxy-3-methylbut-2-enyl diphosphate reductase (405 aa).

Cys-66 contributes to the [4Fe-4S] cluster binding site. A (2E)-4-hydroxy-3-methylbut-2-enyl diphosphate-binding site is contributed by His-96. His-96 provides a ligand contact to dimethylallyl diphosphate. Residue His-96 participates in isopentenyl diphosphate binding. [4Fe-4S] cluster is bound at residue Cys-157. Residue His-185 participates in (2E)-4-hydroxy-3-methylbut-2-enyl diphosphate binding. Dimethylallyl diphosphate is bound at residue His-185. Isopentenyl diphosphate is bound at residue His-185. The active-site Proton donor is Glu-187. Thr-250 serves as a coordination point for (2E)-4-hydroxy-3-methylbut-2-enyl diphosphate. Cys-288 contributes to the [4Fe-4S] cluster binding site. Residues Ser-317, Ser-318, Asn-319, and Ser-380 each contribute to the (2E)-4-hydroxy-3-methylbut-2-enyl diphosphate site. Positions 317, 318, 319, and 380 each coordinate dimethylallyl diphosphate. Ser-317, Ser-318, Asn-319, and Ser-380 together coordinate isopentenyl diphosphate.

The protein belongs to the IspH family. The cofactor is [4Fe-4S] cluster.

It carries out the reaction isopentenyl diphosphate + 2 oxidized [2Fe-2S]-[ferredoxin] + H2O = (2E)-4-hydroxy-3-methylbut-2-enyl diphosphate + 2 reduced [2Fe-2S]-[ferredoxin] + 2 H(+). The catalysed reaction is dimethylallyl diphosphate + 2 oxidized [2Fe-2S]-[ferredoxin] + H2O = (2E)-4-hydroxy-3-methylbut-2-enyl diphosphate + 2 reduced [2Fe-2S]-[ferredoxin] + 2 H(+). Its pathway is isoprenoid biosynthesis; dimethylallyl diphosphate biosynthesis; dimethylallyl diphosphate from (2E)-4-hydroxy-3-methylbutenyl diphosphate: step 1/1. It participates in isoprenoid biosynthesis; isopentenyl diphosphate biosynthesis via DXP pathway; isopentenyl diphosphate from 1-deoxy-D-xylulose 5-phosphate: step 6/6. Catalyzes the conversion of 1-hydroxy-2-methyl-2-(E)-butenyl 4-diphosphate (HMBPP) into a mixture of isopentenyl diphosphate (IPP) and dimethylallyl diphosphate (DMAPP). Acts in the terminal step of the DOXP/MEP pathway for isoprenoid precursor biosynthesis. The chain is 4-hydroxy-3-methylbut-2-enyl diphosphate reductase from Prochlorococcus marinus (strain SARG / CCMP1375 / SS120).